A 371-amino-acid polypeptide reads, in one-letter code: Chaperone protein DnaJ (371 aa).

Residues 5 to 69 (DYYEVLGLSK…QKRAQYDQFG (65 aa)) enclose the J domain. A CR-type zinc finger spans residues 133–215 (GKELNVEIPV…CHGSSKVRKR (83 aa)). The Zn(2+) site is built by Cys-146, Cys-149, Cys-163, Cys-166, Cys-189, Cys-192, Cys-203, and Cys-206. CXXCXGXG motif repeat units follow at residues 146–153 (CDTCKGSG), 163–170 (CKHCSGSG), 189–196 (CGHCSGTG), and 203–210 (CTTCHGSS).

This sequence belongs to the DnaJ family. As to quaternary structure, homodimer. It depends on Zn(2+) as a cofactor.

The protein resides in the cytoplasm. In terms of biological role, participates actively in the response to hyperosmotic and heat shock by preventing the aggregation of stress-denatured proteins and by disaggregating proteins, also in an autonomous, DnaK-independent fashion. Unfolded proteins bind initially to DnaJ; upon interaction with the DnaJ-bound protein, DnaK hydrolyzes its bound ATP, resulting in the formation of a stable complex. GrpE releases ADP from DnaK; ATP binding to DnaK triggers the release of the substrate protein, thus completing the reaction cycle. Several rounds of ATP-dependent interactions between DnaJ, DnaK and GrpE are required for fully efficient folding. Also involved, together with DnaK and GrpE, in the DNA replication of plasmids through activation of initiation proteins. The protein is Chaperone protein DnaJ of Bacillus cereus (strain ATCC 14579 / DSM 31 / CCUG 7414 / JCM 2152 / NBRC 15305 / NCIMB 9373 / NCTC 2599 / NRRL B-3711).